The chain runs to 175 residues: MPGAAEALPTVTVTLVAGAVPPASGALTAHCIGGFWREVGVASDQSLVLTAPKRVEGLFLTLSGSNLTVKVAYNSSGSCEIEKIVGSEIDSTGKFAFPGHREIHVLDTDYEGYAILRVSLMWRGRNFRVLKYFTRSLEDKDRLGFWKFRELTADTGLYLAARPGRCAELLKEELI.

The signal sequence occupies residues 1-25 (MPGAAEALPTVTVTLVAGAVPPASG). N-linked (GlcNAc...) asparagine glycans are attached at residues N66 and N74. A disulfide bridge connects residues C79 and C166.

The protein belongs to the calycin superfamily. Lipocalin family.

Its subcellular location is the secreted. Functionally, may play a role in male fertility. May act as a retinoid carrier protein within the epididymis. The chain is Epididymal-specific lipocalin-8 (LCN8) from Homo sapiens (Human).